A 308-amino-acid chain; its full sequence is Aspartate carbamoyltransferase catalytic subunit (308 aa).

Residues Arg-57 and Thr-58 each contribute to the carbamoyl phosphate site. Position 86 (Lys-86) interacts with L-aspartate. Carbamoyl phosphate contacts are provided by Arg-107, His-135, and Gln-138. Residues Arg-168 and Arg-228 each coordinate L-aspartate. Carbamoyl phosphate is bound by residues Leu-267 and Pro-268.

It belongs to the aspartate/ornithine carbamoyltransferase superfamily. ATCase family. Heterododecamer (2C3:3R2) of six catalytic PyrB chains organized as two trimers (C3), and six regulatory PyrI chains organized as three dimers (R2).

The catalysed reaction is carbamoyl phosphate + L-aspartate = N-carbamoyl-L-aspartate + phosphate + H(+). It participates in pyrimidine metabolism; UMP biosynthesis via de novo pathway; (S)-dihydroorotate from bicarbonate: step 2/3. In terms of biological role, catalyzes the condensation of carbamoyl phosphate and aspartate to form carbamoyl aspartate and inorganic phosphate, the committed step in the de novo pyrimidine nucleotide biosynthesis pathway. The polypeptide is Aspartate carbamoyltransferase catalytic subunit (Leptospira borgpetersenii serovar Hardjo-bovis (strain JB197)).